A 306-amino-acid chain; its full sequence is Pantothenate kinase (306 aa).

An ATP-binding site is contributed by 90 to 97 (GSVAVGKS).

Belongs to the prokaryotic pantothenate kinase family.

The protein resides in the cytoplasm. The enzyme catalyses (R)-pantothenate + ATP = (R)-4'-phosphopantothenate + ADP + H(+). The protein operates within cofactor biosynthesis; coenzyme A biosynthesis; CoA from (R)-pantothenate: step 1/5. In Listeria monocytogenes serotype 4b (strain CLIP80459), this protein is Pantothenate kinase.